A 209-amino-acid chain; its full sequence is Large ribosomal subunit protein uL3 (209 aa).

The residue at position 150 (Gln-150) is an N5-methylglutamine.

It belongs to the universal ribosomal protein uL3 family. Part of the 50S ribosomal subunit. Forms a cluster with proteins L14 and L19. In terms of processing, methylated by PrmB.

Functionally, one of the primary rRNA binding proteins, it binds directly near the 3'-end of the 23S rRNA, where it nucleates assembly of the 50S subunit. This Citrobacter koseri (strain ATCC BAA-895 / CDC 4225-83 / SGSC4696) protein is Large ribosomal subunit protein uL3.